Here is a 352-residue protein sequence, read N- to C-terminus: Photosystem II D2 protein (352 aa).

The helical transmembrane segment at Cys40–Thr60 threads the bilayer. His117 contributes to the chlorophyll a binding site. The helical transmembrane segment at Gly124–Pro140 threads the bilayer. Gln129 and Asn142 together coordinate pheophytin a. The chain crosses the membrane as a helical span at residues Val152–Ser165. Residue His197 participates in chlorophyll a binding. A helical membrane pass occupies residues Gly207–Glu227. 2 residues coordinate a plastoquinone: His214 and Phe261. His214 provides a ligand contact to Fe cation. Residue His268 coordinates Fe cation. A helical transmembrane segment spans residues Gly278–Arg294.

The protein belongs to the reaction center PufL/M/PsbA/D family. In terms of assembly, PSII is composed of 1 copy each of membrane proteins PsbA, PsbB, PsbC, PsbD, PsbE, PsbF, PsbH, PsbI, PsbJ, PsbK, PsbL, PsbM, PsbT, PsbX, PsbY, PsbZ, Psb30/Ycf12, peripheral proteins PsbO, CyanoQ (PsbQ), PsbU, PsbV and a large number of cofactors. It forms dimeric complexes. The cofactor is The D1/D2 heterodimer binds P680, chlorophylls that are the primary electron donor of PSII, and subsequent electron acceptors. It shares a non-heme iron and each subunit binds pheophytin, quinone, additional chlorophylls, carotenoids and lipids. There is also a Cl(-1) ion associated with D1 and D2, which is required for oxygen evolution. The PSII complex binds additional chlorophylls, carotenoids and specific lipids..

Its subcellular location is the cellular thylakoid membrane. The catalysed reaction is 2 a plastoquinone + 4 hnu + 2 H2O = 2 a plastoquinol + O2. Functionally, photosystem II (PSII) is a light-driven water:plastoquinone oxidoreductase that uses light energy to abstract electrons from H(2)O, generating O(2) and a proton gradient subsequently used for ATP formation. It consists of a core antenna complex that captures photons, and an electron transfer chain that converts photonic excitation into a charge separation. The D1/D2 (PsbA/PsbD) reaction center heterodimer binds P680, the primary electron donor of PSII as well as several subsequent electron acceptors. D2 is needed for assembly of a stable PSII complex. This chain is Photosystem II D2 protein, found in Synechococcus elongatus (strain ATCC 33912 / PCC 7942 / FACHB-805) (Anacystis nidulans R2).